The primary structure comprises 96 residues: MSIRPLHDRVVIQRLEEERTSPGGIVIPDTAAEKPMKGKVIAVGHGKTLDNGERRPVEVNVGDQVLFGKYAGTEVKIDGQDYLVMREDDIMAVFEG.

It belongs to the GroES chaperonin family. As to quaternary structure, heptamer of 7 subunits arranged in a ring. Interacts with the chaperonin GroEL.

It localises to the cytoplasm. Together with the chaperonin GroEL, plays an essential role in assisting protein folding. The GroEL-GroES system forms a nano-cage that allows encapsulation of the non-native substrate proteins and provides a physical environment optimized to promote and accelerate protein folding. GroES binds to the apical surface of the GroEL ring, thereby capping the opening of the GroEL channel. The protein is Co-chaperonin GroES of Halorhodospira halophila (strain DSM 244 / SL1) (Ectothiorhodospira halophila (strain DSM 244 / SL1)).